Here is a 2606-residue protein sequence, read N- to C-terminus: MAFQAQTDTGLQLLATASSHQGDCKYGPFAGSQCLSVCVYYLASSFMNNAPVDSREGLDDVLLHGSTLDRLMRTHNFIPMNEFAQLSSVPKVLITHLWSCAIETSPELYGLLSDECVVCAPFIMSLRKALEMNYFEIPQYILYICNGKSGAIIIKNKTYFIFDPHCTSSRDTAAVYASASASSVVAYVGEASREYTACHLYFIPAESSDEPVNEYLLANYGIASALKRSGAYVNLKTLQTHAISESTQPIAPPVPAAPSGMQFFPTQASFPSSQSFVATSTPVPTKALKPTPSHQPSIPGAASLKTALHMATVKRKRIAISPLHSNTESDDSETGKKNTPVKITKPNEADVGEVETFWLDDDISTKQMLSETSSSEKNLPESIFSSSDWDTDSLLSTHESPPATPSLKSGQVNYTSTFSLDNEELGGSNLQLQDKTYKLDSTTFENLPQLLTSLEEHIEKVSKYPHKNDMPVIVDHSVNKCYREAVALYTIDSLLSHVIEQGLISKPEHKSQALNILRYIAIWLNKLSIYTNQVQELINTELYIPYIYQALFATKFDGKLEAMLIEKITKCFQTLHGTSLQDMKNLSKMIQASIKNTPYYDKAVNVQEETENLKSAVSLPYFITTEEELKKIQALAANLWKVIQDHNNSVSHEDSEFHRAVNSVKNFLPIPSDIQPLDYTLSDKADYLGDTVQQLVASITQECQTISNHMLSSMQSNVSFSADIPDFYSLRGKICTTLNNIQTSKDHLGLYNDKLQKARQQLAYLGYEISSITNSQWSTDYTEPVTPIPELGEIQSQLKIFNTNQQNQQMLQNILDEVESMLQAAKSEQTEQGLQKLAMLLPSIEAYLENAGTLLGPEGNAQFDRLRKEITDLIGSVDVMLAYVKNISAHTLATDAQTISNFPTDAKQQRVFQQALTQKVKDLFTQVNASLKTDRPPTFTENDMAALESLAVMSNDSTLSTAAAFYTKITLLLKSKPDCTVPLYDIAHLKSQLATANINSSTKRSLYMLLAQLNKETVSKKGLEQTQAPAPKGPTADTPVTDSKLIQDSQQNDRHQKEKPLKPKKPQAISLPAVKDTTKHLKPSKPQNLSLPVSTNKAPVEESPESSPIESTSPSHSPVSSMESQNGSFSLESSEEELMDTFAVDDHELSDTDHHMDVDKTTTSVAMDDKPSTSPEPPSQSLSAIVQQEERLGEEQAWKKIQIAFKTLDFTDITYSDWVHVTGITQHHDLKVSETFGPTLESLMSPLLQKLKKMTIGAALSLTTYGQAFKWPSIDWMTPYKNNVLFYLSTVRYPSLVDLAEQSRAEIDVLLQLRSSDALLKGTAGTYLESDSRNMLDIVSSIEDAASDYKLNVHTEVEKWTHQVHNIVNTGDSLPPKPDVILPSHLLNPAFEQTIASLNKDFRDYVYTVEKHLLAELSNDFQLLKVLISETENGFQAWEKETANKLLQLISHSLQNAPPEVRQYTVSHTDPLTLFDKLIHDSEVSSKLTYSEASAALHWVESTCAHIATQCQYPAVGAKLQAIIALVAKVKPKLESLVSLENQANNTDDINIIKQAISSLDPKRITGGTSKVQEWTQKVKDLEKLLADTELEASVVQNIQLLRHMALTARSTNLLANLKQKTTSLYEKWVKEHKTGPTSPITGTIKELDLYLTFKLKFIEYYETNQACIFSTFALPASKIDAKDALTPLTPQSPVFDFNTSGPSPPPPINFQQRLEAMCHLNYAPTQPIWLQVFPTVDNLSMDYIPIKNASPLSLQVIFNNFIETYFVQAPQGPQKDTSQYRGSTVLPNVLQAHFGTIATHLINSHWNNILENSTQALQSYTTVHSLHGTAKQNEFMAIIVAVHGLLQSLSTIYLDTPANSSDIPVVLSFRATLEIILWIWPKIIFYFLKMKSFQSGVSFLQIMINRCLINLTSAFVIQHITNSLIMAGVPEPNGYLFCPKYWTQLEPQAYLWGDEKFLQLCSNSQEKARVCFFVCALESINPVVLGQLWRSLKPTFLPDVHTPYDFLKVLVEAAYKPAYDCQVVSKARVDETPPYSYGFPGNSVLRVESKTTKPQGVTTIPISGFEMAAAAILQKFNPVIYLSTKKPVFSNEFTGEIFVVSPLLDCTGNEEPFSSLLTAPLQPVSENTTLASLYTQLEKDIFRSQKLWLQQHLSSPNNLSHLKHPIVLLDSEKKLTGAYSLTNNAPPPQLLNLRFAYDGKGLPNWPMEILQASTLSYSHQQALEDKTKDWIIDIEDLDDSLCIQNMFSAYPPEIHSGPSRSDSEDSEDSLSPTSPTPHLPKAEFTPLPDSPKPPQDPKDKSTPNPPRPTTFPTPLLPCYPLSEAYATLPKPISIKPSARVHFVVPPKSNLAADQLLRDFESLSLQDRPERPKDGPPDINYLVPPHGSYINLQPPNPRMAVIGTLRAADQKSVFTPTRPAGVGSRAKWVSRQLPPHDFVEPVENGDPPGPPGSEERKYSIRQESYQDPTVSLLLRQPPIIEAVRLFPDKSLTAAQMQQAFKQKQLHVCEKSHRKRLLSAPPTIAPNHLSIHEILADRASLVAPRPPFIPIDENLDIEPLFVQFIMEVSIEEAKNVLITFIKKIRQAVTHNAQLLASSIQRLAALYL.

A deubiquitination activity region spans residues 1 to 235 (MAFQAQTDTG…LKRSGAYVNL (235 aa)). Positions 14–225 (LATASSHQGD…LLANYGIASA (212 aa)) constitute a Peptidase C76 domain. Residues Cys34, Asp163, and His165 contribute to the active site. 5 disordered regions span residues 318–349 (IAIS…PNEA), 390–411 (DTDS…KSGQ), 1020–1135 (KKGL…ESSE), 2253–2316 (PEIH…PTPL), and 2434–2458 (PPHD…ERKY). Over residues 1038–1050 (TPVTDSKLIQDSQ) the composition is skewed to polar residues. Over residues 1051–1061 (QNDRHQKEKPL) the composition is skewed to basic and acidic residues. Residues 1085–1097 (KPQNLSLPVSTNK) show a composition bias toward polar residues. Over residues 1105 to 1132 (ESSPIESTSPSHSPVSSMESQNGSFSLE) the composition is skewed to low complexity. A compositionally biased stretch (pro residues) spans 2304 to 2316 (PNPPRPTTFPTPL).

Belongs to the herpesviridae large tegument protein family. Interacts with host CUL1 and CUL4A; these interactions inhibit the E3 ligase activity of cullins. Interacts with inner tegument protein. Interacts with capsid vertex specific component CVC2. Interacts with the major capsid protein/MCP.

It localises to the virion tegument. The protein resides in the host cytoplasm. It is found in the host nucleus. The catalysed reaction is Thiol-dependent hydrolysis of ester, thioester, amide, peptide and isopeptide bonds formed by the C-terminal Gly of ubiquitin (a 76-residue protein attached to proteins as an intracellular targeting signal).. Large tegument protein that plays multiple roles in the viral cycle. During viral entry, remains associated with the capsid while most of the tegument is detached and participates in the capsid transport toward the host nucleus. Plays a role in the routing of the capsid at the nuclear pore complex and subsequent uncoating. Within the host nucleus, acts as a deneddylase and promotes the degradation of nuclear CRLs (cullin-RING ubiquitin ligases) and thereby stabilizes nuclear CRL substrates, while cytoplasmic CRLs remain unaffected. These modifications prevent host cell cycle S-phase progression and create a favorable environment allowing efficient viral genome replication. Participates later in the secondary envelopment of capsids. Indeed, plays a linker role for the association of the outer viral tegument to the capsids together with the inner tegument protein. The sequence is that of Large tegument protein deneddylase (64) from Connochaetes taurinus (Blue wildebeest).